The sequence spans 122 residues: Large ribosomal subunit protein eL18 (122 aa).

Belongs to the eukaryotic ribosomal protein eL18 family.

The sequence is that of Large ribosomal subunit protein eL18 from Picrophilus torridus (strain ATCC 700027 / DSM 9790 / JCM 10055 / NBRC 100828 / KAW 2/3).